Consider the following 249-residue polypeptide: Glucosamine-6-phosphate deaminase 2 (249 aa).

The active-site Proton acceptor; for enolization step is D67. The active-site For ring-opening step is the N136. The active-site Proton acceptor; for ring-opening step is H138. E143 (for ring-opening step) is an active-site residue.

This sequence belongs to the glucosamine/galactosamine-6-phosphate isomerase family. NagB subfamily.

It catalyses the reaction alpha-D-glucosamine 6-phosphate + H2O = beta-D-fructose 6-phosphate + NH4(+). It participates in amino-sugar metabolism; N-acetylneuraminate degradation; D-fructose 6-phosphate from N-acetylneuraminate: step 5/5. Functionally, catalyzes the reversible isomerization-deamination of glucosamine 6-phosphate (GlcN6P) to form fructose 6-phosphate (Fru6P) and ammonium ion. Required for growth on glucosamine and also provides the majority of GlcN6P deaminase activity during growth on N-acetylglucosamine (GlcNAc). This is Glucosamine-6-phosphate deaminase 2 from Bacillus subtilis (strain 168).